A 204-amino-acid chain; its full sequence is Somatotropin (204 aa).

Residues 1–17 (MDRVLLLLSVLSLGVSS) form the signal peptide. Residue Q18 is modified to Pyrrolidone carboxylic acid. H36 lines the Zn(2+) pocket. The cysteines at positions 69 and 177 are disulfide-linked. E186 contacts Zn(2+). C194 and C202 form a disulfide bridge.

This sequence belongs to the somatotropin/prolactin family.

The protein resides in the secreted. Its function is as follows. Growth hormone plays an important role in growth control and is involved in the regulation of several anabolic processes. Implicated as an osmoregulatory substance important for seawater adaptation. This is Somatotropin (gh) from Sciaenops ocellatus (Red drum).